Reading from the N-terminus, the 117-residue chain is Snaclec CHH-B subunit beta (117 aa).

3 disulfide bridges follow: Cys-2/Cys-13, Cys-30/Cys-115, and Cys-92/Cys-107. A C-type lectin domain is found at 9 to 116 (YEGHCYRVFQ…CSKTHNVVCK (108 aa)).

This sequence belongs to the snaclec family. As to quaternary structure, heterodimer of subunits alpha and beta; disulfide-linked. As to expression, expressed by the venom gland.

It localises to the secreted. In terms of biological role, binds to the subunit GPIbalpha (GP1BA) of the platelet GPIb/V/IX receptor system. It inhibits ristocetin- and vWF-induced platelet aggregation in platelet-rich plasma by inhibiting the binding of vWF to GPIbalpha. The sequence is that of Snaclec CHH-B subunit beta from Crotalus horridus (Timber rattlesnake).